A 1059-amino-acid chain; its full sequence is Pleckstrin homology domain-containing family M member 1 (1059 aa).

Residues 40–182 enclose the RUN domain; sequence TSEDGDANTM…LSFELSYKSA (143 aa). Ser-218 is subject to Phosphoserine. Disordered stretches follow at residues 218–244, 272–334, and 354–411; these read SLDSISHSSGSEDIEVQHSGHKIRRDR, LQEN…TPMF, and SEEP…DQGS. Composition is skewed to polar residues over residues 313–334 and 392–401; these read SKAQVNSAPSSGPSQESDTPMF and GSTSDQQPSS. Phosphoserine is present on residues Ser-430, Ser-433, and Ser-488. Positions 536-627 constitute a PH 1 domain; it reads GLMKLGTVAR…WLDRVREALQ (92 aa). The short motif at 634–640 is the LIR element; the sequence is EEEWVNI. The interaction with RAB7A stretch occupies residues 657–1059; that stretch reads LPPYSALLPE…RKYQEQNTVS (403 aa). In terms of domain architecture, PH 2 spans 686-780; that stretch reads DAIKESLLYL…WRDLVRKVLA (95 aa). The segment at 989 to 1043 adopts a Phorbol-ester/DAG-type zinc-finger fold; it reads QHVYHCDLCTQRGFICQICHHQDIIFPFEFDTTVRCAECRTVFHQSCQAVVRKGC.

In terms of assembly, interacts (via N- and C-terminus) with RAB7A (GTP-bound form). Simultaneously interacts with RAB7A and ARL8B; bringing about clustering and fusion of late endosomes and lysosomes. Interacts (via RUN domain) with ARL8B (GTP-bound form); the interaction is required for PLEKHM1 localization to lysosomes and for ARL8B function in delivery and degradation of endocytic and autophagic cargo in lysosomes. PLEKHM1 and PLEKHM2 compete for interaction with ARL8B. Interacts with ARL8A; the interaction is weaker than with ARL8B. Interacts with VPS41, VPS11, VPS18, VPS33A and VPS39; indicative for an association with the HOPS complex; the interactions with, at least, VPS41, VPS11, VPS18 and VPS33A require ARL8B. Interacts with GABARAP, GABARAPL, GABARAPL2, MAP1LC3A, MAP1LC3B and MAP1LC3C. Interacts with PAFAH1B. Interacts (via N- and C-terminus) with NDEL1. Interacts (via C-terminus) with MAP3K7. Interacts (via N- and C-terminus) with FAM98A. Interacts (via C-terminus) with DEF8; this interaction is weak but increased in a RAB7A-dependent manner. May interact with sialyl-lex-positive protein. As to expression, expressed in testis, skeletal muscle, lung, liver, spleen, brain, heart, kidney and bone. Weakly expressed in monocytes (at protein level).

It localises to the autolysosome membrane. The protein localises to the endosome membrane. Its subcellular location is the late endosome membrane. The protein resides in the lysosome membrane. In terms of biological role, acts as a multivalent adapter protein that regulates Rab7-dependent and HOPS complex-dependent fusion events in the endolysosomal system and couples autophagic and the endocytic trafficking pathways. Acts as a dual effector of RAB7A and ARL8B that simultaneously binds these GTPases, bringing about clustering and fusion of late endosomes and lysosomes. Required for late stages of endolysosomal maturation, facilitating both endocytosis-mediated degradation of growth factor receptors and autophagosome clearance. Interaction with Arl8b is a crucial factor in the terminal maturation of autophagosomes and to mediate autophagosome-lysosome fusion. Positively regulates lysosome peripheral distribution and ruffled border formation in osteoclasts. May be involved in negative regulation of endocytic transport from early endosome to late endosome/lysosome implicating its association with Rab7. May have a role in sialyl-lex-mediated transduction of apoptotic signals. Involved in bone resorption. The chain is Pleckstrin homology domain-containing family M member 1 from Rattus norvegicus (Rat).